Consider the following 394-residue polypeptide: Imidazolonepropionase (394 aa).

Histidine 61 and histidine 63 together coordinate Fe(3+). Residues histidine 61 and histidine 63 each coordinate Zn(2+). 4-imidazolone-5-propanoate contacts are provided by arginine 70, tyrosine 133, and histidine 164. Position 133 (tyrosine 133) interacts with N-formimidoyl-L-glutamate. A Fe(3+)-binding site is contributed by histidine 225. Residue histidine 225 participates in Zn(2+) binding. Glutamate 228 contributes to the 4-imidazolone-5-propanoate binding site. Aspartate 299 contacts Fe(3+). Aspartate 299 contributes to the Zn(2+) binding site.

The protein belongs to the metallo-dependent hydrolases superfamily. HutI family. Zn(2+) is required as a cofactor. The cofactor is Fe(3+).

Its subcellular location is the cytoplasm. The catalysed reaction is 4-imidazolone-5-propanoate + H2O = N-formimidoyl-L-glutamate. It participates in amino-acid degradation; L-histidine degradation into L-glutamate; N-formimidoyl-L-glutamate from L-histidine: step 3/3. Its function is as follows. Catalyzes the hydrolytic cleavage of the carbon-nitrogen bond in imidazolone-5-propanoate to yield N-formimidoyl-L-glutamate. It is the third step in the universal histidine degradation pathway. The chain is Imidazolonepropionase from Picrophilus torridus (strain ATCC 700027 / DSM 9790 / JCM 10055 / NBRC 100828 / KAW 2/3).